A 555-amino-acid chain; its full sequence is Energy-dependent translational throttle protein EttA (555 aa).

2 consecutive ABC transporter domains span residues 6 to 259 (YTMH…AQEA) and 324 to 550 (LEVS…RIKY). Residue 39-46 (GLNGAGKS) participates in ATP binding. The segment at 95–139 (SEVVNALKRLDEVYALYADPDADFDKLAAEQGRLEEIIQAHDGHN) is arm. Residues 242–322 (GNYSSWLEQK…IPPGPRLGDK (81 aa)) are ptIM. 356–363 (GPNGAGKS) contributes to the ATP binding site.

The protein belongs to the ABC transporter superfamily. ABCF family. Translational throttle EttA subfamily. As to quaternary structure, monomer. Probably contacts ribosomal proteins L1, L5, L33 and S7, the 16S and 23S rRNA and the P-site containing tRNA(fMet).

The protein localises to the cytoplasm. It catalyses the reaction ATP + H2O = ADP + phosphate + H(+). In terms of biological role, a translation factor that gates the progression of the 70S ribosomal initiation complex (IC, containing tRNA(fMet) in the P-site) into the translation elongation cycle by using a mechanism sensitive to the ATP/ADP ratio. Binds to the 70S ribosome E-site where it modulates the state of the translating ribosome during subunit translocation. ATP hydrolysis probably frees it from the ribosome, which can enter the elongation phase. This chain is Energy-dependent translational throttle protein EttA, found in Escherichia coli O157:H7.